The chain runs to 349 residues: Shematrin-like protein 1 (349 aa).

The signal sequence occupies residues 1–16; that stretch reads MLKLVCAVFLIATVSA.

As to expression, prismatic layer of shell (at protein level).

The protein resides in the secreted. This is Shematrin-like protein 1 from Margaritifera margaritifera (Freshwater pearl mussel).